A 166-amino-acid polypeptide reads, in one-letter code: 16S rRNA aminocarboxypropyltransferase (166 aa).

Residues threonine 17, valine 62, isoleucine 84, tyrosine 99, and serine 103 each coordinate S-adenosyl-L-methionine.

This sequence belongs to the TDD superfamily. TSR3 family.

It is found in the cytoplasm. It catalyses the reaction an N(1)-methylpseudouridine in rRNA + S-adenosyl-L-methionine = N(1)-methyl-N(3)-[(3S)-3-amino-3-carboxypropyl]pseudouridine in rRNA + S-methyl-5'-thioadenosine + H(+). In terms of biological role, aminocarboxypropyltransferase that catalyzes the aminocarboxypropyl transfer on pseudouridine corresponding to position 914 in M.jannaschii 16S rRNA. It constitutes the last step in biosynthesis of the hypermodified N1-methyl-N3-(3-amino-3-carboxypropyl) pseudouridine (m1acp3-Psi). This Saccharolobus solfataricus (strain ATCC 35092 / DSM 1617 / JCM 11322 / P2) (Sulfolobus solfataricus) protein is 16S rRNA aminocarboxypropyltransferase.